The primary structure comprises 320 residues: Probable cell division protein WhiA (320 aa).

Positions 276–310 (TLKELGEMVAGGKISKSGINHRLRKIDEIAERLRA) form a DNA-binding region, H-T-H motif.

This sequence belongs to the WhiA family.

In terms of biological role, involved in cell division and chromosome segregation. The protein is Probable cell division protein WhiA of Geobacillus thermodenitrificans (strain NG80-2).